Reading from the N-terminus, the 326-residue chain is Tagatose 1,6-diphosphate aldolase 2 (326 aa).

The protein belongs to the aldolase LacD family.

The enzyme catalyses D-tagatofuranose 1,6-bisphosphate = D-glyceraldehyde 3-phosphate + dihydroxyacetone phosphate. The protein operates within carbohydrate metabolism; D-tagatose 6-phosphate degradation; D-glyceraldehyde 3-phosphate and glycerone phosphate from D-tagatose 6-phosphate: step 2/2. The protein is Tagatose 1,6-diphosphate aldolase 2 (lacD2) of Streptococcus agalactiae serotype III (strain NEM316).